The primary structure comprises 382 residues: Succinyl-diaminopimelate desuccinylase (382 aa).

His72 is a binding site for Zn(2+). Residue Asp74 is part of the active site. Zn(2+) is bound at residue Asp105. Glu139 (proton acceptor) is an active-site residue. Residues Glu140, Glu168, and His354 each coordinate Zn(2+).

This sequence belongs to the peptidase M20A family. DapE subfamily. In terms of assembly, homodimer. Zn(2+) is required as a cofactor. The cofactor is Co(2+).

The catalysed reaction is N-succinyl-(2S,6S)-2,6-diaminopimelate + H2O = (2S,6S)-2,6-diaminopimelate + succinate. It participates in amino-acid biosynthesis; L-lysine biosynthesis via DAP pathway; LL-2,6-diaminopimelate from (S)-tetrahydrodipicolinate (succinylase route): step 3/3. Its function is as follows. Catalyzes the hydrolysis of N-succinyl-L,L-diaminopimelic acid (SDAP), forming succinate and LL-2,6-diaminopimelate (DAP), an intermediate involved in the bacterial biosynthesis of lysine and meso-diaminopimelic acid, an essential component of bacterial cell walls. The protein is Succinyl-diaminopimelate desuccinylase of Shewanella amazonensis (strain ATCC BAA-1098 / SB2B).